A 220-amino-acid polypeptide reads, in one-letter code: Large ribosomal subunit protein uL3 (220 aa).

The interval 145–169 (GPASHGSKFHRRPGSSGNRTWPGRV) is disordered.

Belongs to the universal ribosomal protein uL3 family. As to quaternary structure, part of the 50S ribosomal subunit. Forms a cluster with proteins L14 and L19.

One of the primary rRNA binding proteins, it binds directly near the 3'-end of the 23S rRNA, where it nucleates assembly of the 50S subunit. The protein is Large ribosomal subunit protein uL3 of Bdellovibrio bacteriovorus (strain ATCC 15356 / DSM 50701 / NCIMB 9529 / HD100).